Here is a 239-residue protein sequence, read N- to C-terminus: Pre-mRNA-splicing factor isy1 (239 aa).

The protein belongs to the ISY1 family. As to quaternary structure, associated with the spliceosome.

It is found in the cytoplasm. The protein resides in the nucleus. In terms of biological role, involved in pre-mRNA splicing. In Neurospora crassa (strain ATCC 24698 / 74-OR23-1A / CBS 708.71 / DSM 1257 / FGSC 987), this protein is Pre-mRNA-splicing factor isy1 (msp-7).